The primary structure comprises 235 residues: Ribonuclease PH (235 aa).

Phosphate contacts are provided by residues Arg86 and 124-126 (GTR).

It belongs to the RNase PH family. In terms of assembly, homohexameric ring arranged as a trimer of dimers.

It carries out the reaction tRNA(n+1) + phosphate = tRNA(n) + a ribonucleoside 5'-diphosphate. In terms of biological role, phosphorolytic 3'-5' exoribonuclease that plays an important role in tRNA 3'-end maturation. Removes nucleotide residues following the 3'-CCA terminus of tRNAs; can also add nucleotides to the ends of RNA molecules by using nucleoside diphosphates as substrates, but this may not be physiologically important. Probably plays a role in initiation of 16S rRNA degradation (leading to ribosome degradation) during starvation. The protein is Ribonuclease PH of Legionella pneumophila (strain Paris).